Reading from the N-terminus, the 365-residue chain is 2-aminoethylphosphonate--pyruvate transaminase (365 aa).

N6-(pyridoxal phosphate)lysine is present on lysine 194.

Belongs to the class-V pyridoxal-phosphate-dependent aminotransferase family. PhnW subfamily. In terms of assembly, homodimer. It depends on pyridoxal 5'-phosphate as a cofactor.

The catalysed reaction is (2-aminoethyl)phosphonate + pyruvate = phosphonoacetaldehyde + L-alanine. Functionally, involved in phosphonate degradation. This is 2-aminoethylphosphonate--pyruvate transaminase from Bacillus cereus (strain Q1).